The sequence spans 149 residues: Nucleoside diphosphate kinase (149 aa).

ATP is bound by residues Lys9, Phe57, Arg85, Thr91, Arg102, and Asn112. His115 functions as the Pros-phosphohistidine intermediate in the catalytic mechanism.

Belongs to the NDK family. Homotetramer. Mg(2+) serves as cofactor.

It localises to the cytoplasm. It carries out the reaction a 2'-deoxyribonucleoside 5'-diphosphate + ATP = a 2'-deoxyribonucleoside 5'-triphosphate + ADP. The enzyme catalyses a ribonucleoside 5'-diphosphate + ATP = a ribonucleoside 5'-triphosphate + ADP. Functionally, major role in the synthesis of nucleoside triphosphates other than ATP. The ATP gamma phosphate is transferred to the NDP beta phosphate via a ping-pong mechanism, using a phosphorylated active-site intermediate. This Herpetosiphon aurantiacus (strain ATCC 23779 / DSM 785 / 114-95) protein is Nucleoside diphosphate kinase.